The primary structure comprises 168 residues: MRVLGIDPGLRNMGWGVIDVSGTRLAHVANGICHSDSGDLAHRLLSLHGQLTDVLARFQPDTAAVEHTFVNKDGVATLKLGQARGIALLVPAQAGLAVGEYAPNAVKKTVVGVGHAAKEQIQHMVRLHLPGVHLAGPDAADALAVAICHAHHVQSSGRLEAALARAAR.

Catalysis depends on residues Asp7, Glu66, and Asp138. Asp7, Glu66, and Asp138 together coordinate Mg(2+).

This sequence belongs to the RuvC family. In terms of assembly, homodimer which binds Holliday junction (HJ) DNA. The HJ becomes 2-fold symmetrical on binding to RuvC with unstacked arms; it has a different conformation from HJ DNA in complex with RuvA. In the full resolvosome a probable DNA-RuvA(4)-RuvB(12)-RuvC(2) complex forms which resolves the HJ. The cofactor is Mg(2+).

Its subcellular location is the cytoplasm. The catalysed reaction is Endonucleolytic cleavage at a junction such as a reciprocal single-stranded crossover between two homologous DNA duplexes (Holliday junction).. Functionally, the RuvA-RuvB-RuvC complex processes Holliday junction (HJ) DNA during genetic recombination and DNA repair. Endonuclease that resolves HJ intermediates. Cleaves cruciform DNA by making single-stranded nicks across the HJ at symmetrical positions within the homologous arms, yielding a 5'-phosphate and a 3'-hydroxyl group; requires a central core of homology in the junction. The consensus cleavage sequence is 5'-(A/T)TT(C/G)-3'. Cleavage occurs on the 3'-side of the TT dinucleotide at the point of strand exchange. HJ branch migration catalyzed by RuvA-RuvB allows RuvC to scan DNA until it finds its consensus sequence, where it cleaves and resolves the cruciform DNA. The sequence is that of Crossover junction endodeoxyribonuclease RuvC from Cereibacter sphaeroides (strain ATCC 17023 / DSM 158 / JCM 6121 / CCUG 31486 / LMG 2827 / NBRC 12203 / NCIMB 8253 / ATH 2.4.1.) (Rhodobacter sphaeroides).